We begin with the raw amino-acid sequence, 314 residues long: tRNA dimethylallyltransferase (314 aa).

The tract at residues 1-24 is disordered; that stretch reads MAEEPQRSPAPTSPFAFTVPSNPL. ATP is bound at residue 40 to 47; it reads GPTASGKS. Substrate is bound at residue 42-47; it reads TASGKS.

It belongs to the IPP transferase family. In terms of assembly, monomer. Mg(2+) serves as cofactor.

It catalyses the reaction adenosine(37) in tRNA + dimethylallyl diphosphate = N(6)-dimethylallyladenosine(37) in tRNA + diphosphate. Its function is as follows. Catalyzes the transfer of a dimethylallyl group onto the adenine at position 37 in tRNAs that read codons beginning with uridine, leading to the formation of N6-(dimethylallyl)adenosine (i(6)A). This Cereibacter sphaeroides (strain ATCC 17029 / ATH 2.4.9) (Rhodobacter sphaeroides) protein is tRNA dimethylallyltransferase.